Reading from the N-terminus, the 370-residue chain is uncharacterized protein (370 aa).

Residues aspartate 152, histidine 154, aspartate 184, asparagine 215, histidine 306, and histidine 308 each coordinate a divalent metal cation.

The protein belongs to the metallophosphoesterase superfamily. A divalent metal cation is required as a cofactor.

This is an uncharacterized protein from Helicobacter pylori (strain J99 / ATCC 700824) (Campylobacter pylori J99).